The primary structure comprises 226 residues: MIVGVILFGGKGTRFSKDFPKQFLKFNGKALMEHTVEKFLLDCFEFLVVVSNKDYINKSIEILKKFEKKIYVIEGGKTREHSTFNAIKFLENKIDLEDIVLIHDGARPFVNKDIIEKNIENAKLFGATVTAISSENTIAVVENDFILSVPKRDSIFIIQTPQTFKYKVLKDSFFKFSNRLDNFTDDSSVVLASGYKVSITEGNKKNIKITTVEDLHLMGVDEIVGG.

Belongs to the IspD/TarI cytidylyltransferase family. IspD subfamily.

The enzyme catalyses 2-C-methyl-D-erythritol 4-phosphate + CTP + H(+) = 4-CDP-2-C-methyl-D-erythritol + diphosphate. The protein operates within isoprenoid biosynthesis; isopentenyl diphosphate biosynthesis via DXP pathway; isopentenyl diphosphate from 1-deoxy-D-xylulose 5-phosphate: step 2/6. Catalyzes the formation of 4-diphosphocytidyl-2-C-methyl-D-erythritol from CTP and 2-C-methyl-D-erythritol 4-phosphate (MEP). The protein is 2-C-methyl-D-erythritol 4-phosphate cytidylyltransferase of Thermosipho africanus (strain TCF52B).